The sequence spans 290 residues: Shikimate dehydrogenase (NADP(+)) (290 aa).

Residues 18–20 (SYS) and Thr66 each bind shikimate. Lys70 functions as the Proton acceptor in the catalytic mechanism. Glu82 lines the NADP(+) pocket. Shikimate-binding residues include Asn91 and Asp106. Residues 130-134 (GSGGA) and Met229 each bind NADP(+). Residue Tyr231 coordinates shikimate. Gly252 serves as a coordination point for NADP(+).

The protein belongs to the shikimate dehydrogenase family. As to quaternary structure, homodimer.

It catalyses the reaction shikimate + NADP(+) = 3-dehydroshikimate + NADPH + H(+). It functions in the pathway metabolic intermediate biosynthesis; chorismate biosynthesis; chorismate from D-erythrose 4-phosphate and phosphoenolpyruvate: step 4/7. Involved in the biosynthesis of the chorismate, which leads to the biosynthesis of aromatic amino acids. Catalyzes the reversible NADPH linked reduction of 3-dehydroshikimate (DHSA) to yield shikimate (SA). The sequence is that of Shikimate dehydrogenase (NADP(+)) from Chlorobium phaeovibrioides (strain DSM 265 / 1930) (Prosthecochloris vibrioformis (strain DSM 265)).